Reading from the N-terminus, the 340-residue chain is uncharacterized protein (340 aa).

This is an uncharacterized protein from Archaeoglobus fulgidus (strain ATCC 49558 / DSM 4304 / JCM 9628 / NBRC 100126 / VC-16).